A 316-amino-acid polypeptide reads, in one-letter code: Pantothenate kinase (316 aa).

Residue 95-102 (GSVAVGKS) coordinates ATP.

This sequence belongs to the prokaryotic pantothenate kinase family.

The protein localises to the cytoplasm. It carries out the reaction (R)-pantothenate + ATP = (R)-4'-phosphopantothenate + ADP + H(+). Its pathway is cofactor biosynthesis; coenzyme A biosynthesis; CoA from (R)-pantothenate: step 1/5. This Salmonella agona (strain SL483) protein is Pantothenate kinase.